Here is a 466-residue protein sequence, read N- to C-terminus: MLPSTIQTLTLFLTSGGVLLSLYVSASLSYLLYSDILLKFSPTKRTAPTMSLECVNVSNAQAVNHSATKEMTFLLPEPEWTYPRLSCQGSTFQKALLISPHRFGETRGNSAPLIIREPFVACGPKECRHFALTHYAAQPGGYYNGTRKDRNKLRHLISVKLGKIPTVENSIFHMAAWSGSACHDGREWTYIGVDGPDSDALIKIKYGEAYTDTYHSYAHNILRTQESACNCIGGDCYLMITDGSASGISKCRFLKIREGRIIKEIFPAGRVEHTEECTCGFASNKTIECACRDNSYTAKRPFVKLNVETDTAEIRLMCTETYLDTPRPDDGSITGPCESNGDKGLGGIKGGFVHQRMASKIGRWYSRTMSKTERMGMELYVKYDGDPWTDSDALAPSGVMVSIKEPGWYSFGFEIKDKKCDVPCIGIEMVHDGGKETWHSAATAIYCLMGSGQLLWDTVTGVDMAL.

Over 1-11 (MLPSTIQTLTL) the chain is Intravirion. Residues 12–34 (FLTSGGVLLSLYVSASLSYLLYS) traverse the membrane as a helical segment. Residues 13–35 (LTSGGVLLSLYVSASLSYLLYSD) are involved in apical transport and lipid raft association. Residues 35–466 (DILLKFSPTK…DTVTGVDMAL (432 aa)) lie on the Virion surface side of the membrane. Positions 38 to 86 (LKFSPTKRTAPTMSLECVNVSNAQAVNHSATKEMTFLLPEPEWTYPRLS) are hypervariable stalk region. 2 N-linked (GlcNAc...) asparagine; by host glycosylation sites follow: asparagine 56 and asparagine 64. Intrachain disulfides connect cysteine 87–cysteine 420, cysteine 122–cysteine 127, cysteine 182–cysteine 229, cysteine 231–cysteine 236, cysteine 277–cysteine 291, cysteine 279–cysteine 289, cysteine 318–cysteine 337, and cysteine 424–cysteine 447. Positions 89–466 (GSTFQKALLI…DTVTGVDMAL (378 aa)) are head of neuraminidase. Arginine 116 contributes to the substrate binding site. An N-linked (GlcNAc...) asparagine; by host glycan is attached at asparagine 144. The active-site Proton donor/acceptor is the aspartate 149. Substrate is bound at residue arginine 150. A substrate-binding site is contributed by 275–276 (EE). Asparagine 284 carries an N-linked (GlcNAc...) asparagine; by host glycan. Arginine 292 is a binding site for substrate. Residues aspartate 293 and aspartate 324 each coordinate Ca(2+). Arginine 374 serves as a coordination point for substrate. The active-site Nucleophile is the tyrosine 409.

The protein belongs to the glycosyl hydrolase 34 family. Homotetramer. Ca(2+) is required as a cofactor. N-glycosylated.

The protein resides in the virion membrane. The protein localises to the host apical cell membrane. It catalyses the reaction Hydrolysis of alpha-(2-&gt;3)-, alpha-(2-&gt;6)-, alpha-(2-&gt;8)- glycosidic linkages of terminal sialic acid residues in oligosaccharides, glycoproteins, glycolipids, colominic acid and synthetic substrates.. Inhibited by the neuraminidase inhibitors zanamivir (Relenza) and oseltamivir (Tamiflu). These drugs interfere with the release of progeny virus from infected cells and are effective against all influenza strains. Resistance to neuraminidase inhibitors is quite rare. Catalyzes the removal of terminal sialic acid residues from viral and cellular glycoconjugates. Cleaves off the terminal sialic acids on the glycosylated HA during virus budding to facilitate virus release. Additionally helps virus spread through the circulation by further removing sialic acids from the cell surface. These cleavages prevent self-aggregation and ensure the efficient spread of the progeny virus from cell to cell. Otherwise, infection would be limited to one round of replication. Described as a receptor-destroying enzyme because it cleaves a terminal sialic acid from the cellular receptors. May facilitate viral invasion of the upper airways by cleaving the sialic acid moieties on the mucin of the airway epithelial cells. Likely to plays a role in the budding process through its association with lipid rafts during intracellular transport. May additionally display a raft-association independent effect on budding. Plays a role in the determination of host range restriction on replication and virulence. Sialidase activity in late endosome/lysosome traffic seems to enhance virus replication. The sequence is that of Neuraminidase from Influenza B virus (strain B/Maryland/1959).